We begin with the raw amino-acid sequence, 184 residues long: Phosducin-like protein 3 (184 aa).

The interval 45 to 184 is thioredoxin fold; sequence HGELKEIDEQ…VKNNKFKEDD (140 aa).

The protein belongs to the phosducin family.

This Dictyostelium discoideum (Social amoeba) protein is Phosducin-like protein 3 (phlp3).